The chain runs to 106 residues: Nucleoid-associated protein bll8115 (106 aa).

Belongs to the YbaB/EbfC family. In terms of assembly, homodimer.

It is found in the cytoplasm. It localises to the nucleoid. Functionally, binds to DNA and alters its conformation. May be involved in regulation of gene expression, nucleoid organization and DNA protection. This Bradyrhizobium diazoefficiens (strain JCM 10833 / BCRC 13528 / IAM 13628 / NBRC 14792 / USDA 110) protein is Nucleoid-associated protein bll8115.